Consider the following 360-residue polypeptide: Malate dehydrogenase (360 aa).

Belongs to the LDH2/MDH2 oxidoreductase family. In terms of assembly, homodimer.

The protein resides in the cytoplasm. It catalyses the reaction (S)-malate + NAD(+) = oxaloacetate + NADH + H(+). The chain is Malate dehydrogenase (mdh) from Pyrococcus horikoshii (strain ATCC 700860 / DSM 12428 / JCM 9974 / NBRC 100139 / OT-3).